A 241-amino-acid polypeptide reads, in one-letter code: uncharacterized protein (241 aa).

Disordered stretches follow at residues Glu-19 to Gly-59, Val-101 to Ser-139, and Arg-152 to Ser-182. Gly residues predominate over residues Ala-34 to Ser-48. The segment covering Pro-49 to Leu-58 has biased composition (polar residues). A compositionally biased stretch (pro residues) spans Pro-106–Pro-118.

This is an uncharacterized protein from Homo sapiens (Human).